The following is an 816-amino-acid chain: Leucine--tRNA ligase (816 aa).

The short motif at 40-51 (SYPSGSQLHAGH) is the 'HIGH' region element. The 'KMSKS' region signature appears at 576–580 (KMSKS). Lys579 provides a ligand contact to ATP.

This sequence belongs to the class-I aminoacyl-tRNA synthetase family.

Its subcellular location is the cytoplasm. The catalysed reaction is tRNA(Leu) + L-leucine + ATP = L-leucyl-tRNA(Leu) + AMP + diphosphate. This chain is Leucine--tRNA ligase, found in Clostridium perfringens (strain SM101 / Type A).